Reading from the N-terminus, the 623-residue chain is Flap endonuclease 1 (623 aa).

The segment at 1–106 (MGIKGLTKFI…SELEKRGEKR (106 aa)) is N-domain. Residue Asp-34 participates in Mg(2+) binding. DNA is bound by residues Arg-47 and Arg-72. Mg(2+) is bound by residues Asp-88, Glu-160, Glu-162, Asp-181, and Asp-183. An I-domain region spans residues 124–267 (EIKKQSGRTV…KTAYNLIKEY (144 aa)). Glu-160 provides a ligand contact to DNA. Residues Gly-245 and Asp-247 each contribute to the DNA site. Residue Asp-247 participates in Mg(2+) binding. Positions 350–358 (TQRRLDNFF) are interaction with PCNA. The tract at residues 368 to 517 (LVIEESQSQS…LSSNSTLHSC (150 aa)) is disordered. 2 stretches are compositionally biased toward basic and acidic residues: residues 410–424 (TKVE…KDEE) and 466–482 (QKSD…KTEQ). Residues 502–517 (AGSNTHLSSNSTLHSC) show a composition bias toward polar residues.

The protein belongs to the XPG/RAD2 endonuclease family. FEN1 subfamily. Interacts with PCNA. Three molecules of FEN1 bind to one PCNA trimer with each molecule binding to one PCNA monomer. PCNA stimulates the nuclease activity without altering cleavage specificity. Mg(2+) serves as cofactor. In terms of processing, phosphorylated. Phosphorylation upon DNA damage induces relocalization to the nuclear plasma.

It is found in the nucleus. It localises to the nucleolus. The protein localises to the nucleoplasm. The protein resides in the mitochondrion. Structure-specific nuclease with 5'-flap endonuclease and 5'-3' exonuclease activities involved in DNA replication and repair. During DNA replication, cleaves the 5'-overhanging flap structure that is generated by displacement synthesis when DNA polymerase encounters the 5'-end of a downstream Okazaki fragment. It enters the flap from the 5'-end and then tracks to cleave the flap base, leaving a nick for ligation. Also involved in the long patch base excision repair (LP-BER) pathway, by cleaving within the apurinic/apyrimidinic (AP) site-terminated flap. Acts as a genome stabilization factor that prevents flaps from equilibrating into structures that lead to duplications and deletions. Also possesses 5'-3' exonuclease activity on nicked or gapped double-stranded DNA, and exhibits RNase H activity. Also involved in replication and repair of rDNA and in repairing mitochondrial DNA. The polypeptide is Flap endonuclease 1 (Plasmodium vivax (strain Salvador I)).